A 409-amino-acid polypeptide reads, in one-letter code: Na(+)-translocating NADH-quinone reductase subunit F (409 aa).

Residues 5 to 25 (FIFGIIAFTALVLVLAVIILF) traverse the membrane as a helical segment. In terms of domain architecture, 2Fe-2S ferredoxin-type spans 34-128 (GDITISINND…SMDVELPEEI (95 aa)). [2Fe-2S] cluster is bound by residues Cys71, Cys77, Cys80, and Cys112. The region spanning 131 to 271 (VKKWECTVIS…SGPFGEFFAK (141 aa)) is the FAD-binding FR-type domain.

It belongs to the NqrF family. Composed of six subunits; NqrA, NqrB, NqrC, NqrD, NqrE and NqrF. [2Fe-2S] cluster serves as cofactor. The cofactor is FAD.

The protein localises to the cell inner membrane. It catalyses the reaction a ubiquinone + n Na(+)(in) + NADH + H(+) = a ubiquinol + n Na(+)(out) + NAD(+). Its function is as follows. NQR complex catalyzes the reduction of ubiquinone-1 to ubiquinol by two successive reactions, coupled with the transport of Na(+) ions from the cytoplasm to the periplasm. The first step is catalyzed by NqrF, which accepts electrons from NADH and reduces ubiquinone-1 to ubisemiquinone by a one-electron transfer pathway. The chain is Na(+)-translocating NADH-quinone reductase subunit F from Actinobacillus pleuropneumoniae serotype 5b (strain L20).